A 117-amino-acid chain; its full sequence is Large ribosomal subunit protein bL17 (117 aa).

Belongs to the bacterial ribosomal protein bL17 family. As to quaternary structure, part of the 50S ribosomal subunit. Contacts protein L32.

The protein is Large ribosomal subunit protein bL17 of Campylobacter lari (strain RM2100 / D67 / ATCC BAA-1060).